Reading from the N-terminus, the 347-residue chain is N-acetyl-gamma-glutamyl-phosphate reductase (347 aa).

The active site involves cysteine 151.

Belongs to the NAGSA dehydrogenase family. Type 1 subfamily.

The protein localises to the cytoplasm. It carries out the reaction N-acetyl-L-glutamate 5-semialdehyde + phosphate + NADP(+) = N-acetyl-L-glutamyl 5-phosphate + NADPH + H(+). Its pathway is amino-acid biosynthesis; L-arginine biosynthesis; N(2)-acetyl-L-ornithine from L-glutamate: step 3/4. Functionally, catalyzes the NADPH-dependent reduction of N-acetyl-5-glutamyl phosphate to yield N-acetyl-L-glutamate 5-semialdehyde. This Pelotomaculum thermopropionicum (strain DSM 13744 / JCM 10971 / SI) protein is N-acetyl-gamma-glutamyl-phosphate reductase.